The chain runs to 278 residues: Protein MGF 505-3R (278 aa).

Belongs to the asfivirus MGF 505 family.

In terms of biological role, plays a role in virus cell tropism, and may be required for efficient virus replication in macrophages. This African swine fever virus (isolate Tick/Malawi/Lil 20-1/1983) (ASFV) protein is Protein MGF 505-3R.